Here is a 138-residue protein sequence, read N- to C-terminus: Acidic phospholipase A2 Cvv-E6b (138 aa).

A signal peptide spans 1 to 16 (MRTLWILAVLLLGVEG). Cystine bridges form between Cys-42–Cys-131, Cys-44–Cys-60, Cys-59–Cys-111, Cys-65–Cys-138, Cys-66–Cys-104, Cys-73–Cys-97, and Cys-91–Cys-102. Ca(2+) is bound by residues Tyr-43, Gly-45, and Gly-47. Residue His-63 is part of the active site. Ca(2+) is bound at residue Asp-64. Asp-105 is a catalytic residue.

Ca(2+) serves as cofactor. Expressed by the venom gland.

The protein resides in the secreted. The catalysed reaction is a 1,2-diacyl-sn-glycero-3-phosphocholine + H2O = a 1-acyl-sn-glycero-3-phosphocholine + a fatty acid + H(+). Functionally, snake venom phospholipase A2 (PLA2) that shows very low inhibition of ADP-induced platelet aggregation in platelet-rich plasma of human, rabbit and guinea pig. PLA2 catalyzes the calcium-dependent hydrolysis of the 2-acyl groups in 3-sn-phosphoglycerides. The sequence is that of Acidic phospholipase A2 Cvv-E6b from Crotalus viridis viridis (Prairie rattlesnake).